Reading from the N-terminus, the 412-residue chain is 43 kDa receptor-associated protein of the synapse (412 aa).

Glycine 2 is lipidated: N-myristoyl glycine. TPR repeat units follow at residues 6–39 (TKQQ…STEL), 83–116 (TEAY…EGGP), 123–156 (GQVC…AHGN), 163–196 (CRVC…VADY), 206–239 (AMSR…ALQH), 246–279 (ALCL…MTEI), and 286–319 (AHVL…ADAV). Tyrosine 196 bears the Phosphotyrosine mark. The segment at 363–403 (CGLCGESIGDQNSQLQALPCSHLFHLKCLQTNGNRGCPNCK) adopts an RING-type zinc-finger fold. Serine 405 carries the post-translational modification Phosphoserine.

It belongs to the RAPsyn family.

Its subcellular location is the cell membrane. The protein resides in the postsynaptic cell membrane. The protein localises to the cytoplasm. It is found in the cytoskeleton. Postsynaptic protein required for clustering of nicotinic acetylcholine receptors (nAChRs) at the neuromuscular junction. It may link the receptor to the underlying postsynaptic cytoskeleton, possibly by direct association with actin or spectrin. The sequence is that of 43 kDa receptor-associated protein of the synapse (RAPSN) from Tetronarce californica (Pacific electric ray).